A 187-amino-acid polypeptide reads, in one-letter code: Ribosome maturation factor RimM (187 aa).

In terms of domain architecture, PRC barrel spans 94–168 (DDEFYHADLV…RVIVDMPDGL (75 aa)). Positions 167–187 (GLIGGDKPDTSDTAPLGQDFD) are disordered.

Belongs to the RimM family. As to quaternary structure, binds ribosomal protein uS19.

The protein resides in the cytoplasm. Functionally, an accessory protein needed during the final step in the assembly of 30S ribosomal subunit, possibly for assembly of the head region. Essential for efficient processing of 16S rRNA. May be needed both before and after RbfA during the maturation of 16S rRNA. It has affinity for free ribosomal 30S subunits but not for 70S ribosomes. In Jannaschia sp. (strain CCS1), this protein is Ribosome maturation factor RimM.